The sequence spans 323 residues: Isoeugenol synthase 1 (323 aa).

NADP(+) contacts are provided by residues 14–17 (TGYL), 36–47 (VMPLKKNSDDSK), 88–90 (VPQ), 113–115 (SEF), Lys135, and 155–157 (NSL). Lys135 acts as the Proton donor/acceptor in catalysis.

This sequence belongs to the NmrA-type oxidoreductase family. As to expression, expressed in flowers, especially in corolla and tubes of petals, probably in both epidermal and mesophyll cell layers.

The enzyme catalyses (E)-isoeugenol + acetate + NADP(+) = (E)-coniferyl acetate + NADPH. The protein operates within aromatic compound metabolism; phenylpropanoid biosynthesis. Its activity is regulated as follows. Inhibited by zinc and copper ions. Repressed by 4-bromo-cinnamyl acetate. Its function is as follows. Involved in the biosynthesis of the floral volatile isoeugenol. Catalyzes the synthesis of the phenylpropene isoeugenol from coniferyl acetate. Phenylpropenes are the primary constituents of various essential plant oils. They are produced as antimicrobial and antianimal compounds, or as floral attractants of pollinators. Isoeugenol is a characteristic aromatic constituent of spices and a floral volatile compound. This chain is Isoeugenol synthase 1, found in Petunia hybrida (Petunia).